The chain runs to 343 residues: Ribosomal RNA small subunit methyltransferase C (343 aa).

The protein belongs to the methyltransferase superfamily. RsmC family. As to quaternary structure, monomer.

It localises to the cytoplasm. It carries out the reaction guanosine(1207) in 16S rRNA + S-adenosyl-L-methionine = N(2)-methylguanosine(1207) in 16S rRNA + S-adenosyl-L-homocysteine + H(+). Functionally, specifically methylates the guanine in position 1207 of 16S rRNA in the 30S particle. The sequence is that of Ribosomal RNA small subunit methyltransferase C from Escherichia coli O7:K1 (strain IAI39 / ExPEC).